The primary structure comprises 529 residues: GMP synthase [glutamine-hydrolyzing] (529 aa).

In terms of domain architecture, Glutamine amidotransferase type-1 spans 16–205; it reads PVLVVDFGAQ…LHDFAGLDAD (190 aa). The Nucleophile role is filled by Cys93. Residues His179 and Glu181 contribute to the active site. The GMPS ATP-PPase domain occupies 206 to 403; sequence WTAANIAGVL…LDLPEEIVAR (198 aa). ATP is bound at residue 233 to 239; that stretch reads SGGVDSA.

In terms of assembly, homodimer.

It catalyses the reaction XMP + L-glutamine + ATP + H2O = GMP + L-glutamate + AMP + diphosphate + 2 H(+). It functions in the pathway purine metabolism; GMP biosynthesis; GMP from XMP (L-Gln route): step 1/1. In terms of biological role, catalyzes the synthesis of GMP from XMP. The chain is GMP synthase [glutamine-hydrolyzing] from Mycobacterium leprae (strain Br4923).